Consider the following 354-residue polypeptide: Trans-L-3-hydroxyproline dehydratase (354 aa).

Cysteine 104 (proton acceptor) is an active-site residue. Residues 105 to 106, aspartate 269, and 274 to 275 each bind substrate; these read GH and GS.

This sequence belongs to the proline racemase family. Homodimer.

The catalysed reaction is trans-3-hydroxy-L-proline = 1-pyrroline-2-carboxylate + H2O. In terms of biological role, catalyzes the dehydration of trans-3-hydroxy-L-proline to delta-1-pyrroline-2-carboxylate (Pyr2C). This chain is Trans-L-3-hydroxyproline dehydratase (L3HYPDH), found in Pongo abelii (Sumatran orangutan).